The following is a 374-amino-acid chain: MSKGIVLLAAGGTGGHVFPAEALAFKLKERGYSVHLVTDSRAERYAGKFPAEEIHVVPSATIGSKNPVAVARSLWTLWSGMRAAKKLIQRLQPVIVVGFGGYPTVPPLLAATRLGVPSMIHEQNAVMGRANKALATRVQAIAGGFLPEGGAAFPDKTVTTGNPVRPAIIAAAEVPYTPSHPGEAFNLVVFGGSQGAQYFSKALPTAISLLDDALRVRLRITQQVRPEDMEMVSGCVARLEMGADIAPFFTDMAERLARAHLVICRSGASTVSEISVIGRPAVLVPYPHALDHDQAANAAALAATGGAKVIAQSELSPEKIAAILTAVMNDPEKLSHMAAAAKLAGKPDAANLLADMVEAIAARRTIAEFKRTRA.

UDP-N-acetyl-alpha-D-glucosamine-binding positions include 13–15, Asn124, Arg165, Ser193, and Gln294; that span reads TGG.

Belongs to the glycosyltransferase 28 family. MurG subfamily.

The protein resides in the cell inner membrane. The enzyme catalyses di-trans,octa-cis-undecaprenyl diphospho-N-acetyl-alpha-D-muramoyl-L-alanyl-D-glutamyl-meso-2,6-diaminopimeloyl-D-alanyl-D-alanine + UDP-N-acetyl-alpha-D-glucosamine = di-trans,octa-cis-undecaprenyl diphospho-[N-acetyl-alpha-D-glucosaminyl-(1-&gt;4)]-N-acetyl-alpha-D-muramoyl-L-alanyl-D-glutamyl-meso-2,6-diaminopimeloyl-D-alanyl-D-alanine + UDP + H(+). Its pathway is cell wall biogenesis; peptidoglycan biosynthesis. Cell wall formation. Catalyzes the transfer of a GlcNAc subunit on undecaprenyl-pyrophosphoryl-MurNAc-pentapeptide (lipid intermediate I) to form undecaprenyl-pyrophosphoryl-MurNAc-(pentapeptide)GlcNAc (lipid intermediate II). This Rhizobium johnstonii (strain DSM 114642 / LMG 32736 / 3841) (Rhizobium leguminosarum bv. viciae) protein is UDP-N-acetylglucosamine--N-acetylmuramyl-(pentapeptide) pyrophosphoryl-undecaprenol N-acetylglucosamine transferase.